Here is a 131-residue protein sequence, read N- to C-terminus: Bacteriohemerythrin (131 aa).

The Fe cation site is built by histidine 22, histidine 58, glutamate 62, histidine 77, histidine 81, histidine 117, and aspartate 122.

Belongs to the hemerythrin family. As to quaternary structure, monomer.

Oxygen-binding protein. May be involved in a storage mechanism or for delivery to oxygen-requiring enzymes. The oxygen-binding site contains two iron atoms. The polypeptide is Bacteriohemerythrin (Methylococcus capsulatus (strain ATCC 33009 / NCIMB 11132 / Bath)).